Consider the following 416-residue polypeptide: Probable glucan 1,3-beta-glucosidase A (416 aa).

The N-terminal stretch at 1-21 is a signal peptide; that stretch reads MLYNLSKAVLALSVLAASADA. Glutamate 209 serves as the catalytic Proton donor. 2 cysteine pairs are disulfide-bonded: cysteine 290–cysteine 415 and cysteine 316–cysteine 341. Residue glutamate 308 is the Nucleophile of the active site.

This sequence belongs to the glycosyl hydrolase 5 (cellulase A) family. As to quaternary structure, monomer. Mn(2+) serves as cofactor.

Its subcellular location is the secreted. The enzyme catalyses Successive hydrolysis of beta-D-glucose units from the non-reducing ends of (1-&gt;3)-beta-D-glucans, releasing alpha-glucose.. Beta-glucanases participate in the metabolism of beta-glucan, the main structural component of the cell wall. It could also function biosynthetically as a transglycosylase. The chain is Probable glucan 1,3-beta-glucosidase A (exgA) from Aspergillus terreus (strain NIH 2624 / FGSC A1156).